The sequence spans 251 residues: Tyrosine transport ATP-binding protein (251 aa).

The 247-residue stretch at 2–248 folds into the ABC transporter domain; that stretch reads LQIKNLSKSF…TVEEILEKFE (247 aa). 39–46 lines the ATP pocket; the sequence is GSNGTGKS.

The protein belongs to the ABC transporter superfamily. In terms of assembly, the complex is probably composed of two ATP-binding proteins (CDR20291_0806), two transmembrane proteins (CDR20291_0807) and a solute-binding protein (CDR20291_0805).

It is found in the cell membrane. The catalysed reaction is L-tyrosine(out) + ATP + H2O = L-tyrosine(in) + ADP + phosphate + H(+). In terms of biological role, probably part of an ABC transporter complex involved in tyrosine uptake. May also import phenylalanine. Probably responsible for energy coupling to the transport system. This Clostridioides difficile (strain R20291) (Peptoclostridium difficile) protein is Tyrosine transport ATP-binding protein.